The following is a 107-amino-acid chain: MIPGEYVLKKEPILCNQNKQTIKIRVLNRGDRPVQVGSHFHFFEVNQSLQFHREKAFGMRLNIPAGTAVRFEPGDAKEVEIIPFSGERKVYGLNNVTNGSVEMGKRK.

Belongs to the urease beta subunit family. As to quaternary structure, heterotrimer of UreA (gamma), UreB (beta) and UreC (alpha) subunits. Three heterotrimers associate to form the active enzyme.

It is found in the cytoplasm. The enzyme catalyses urea + 2 H2O + H(+) = hydrogencarbonate + 2 NH4(+). The protein operates within nitrogen metabolism; urea degradation; CO(2) and NH(3) from urea (urease route): step 1/1. This is Urease subunit beta from Bacillus sp. (strain TB-90).